The primary structure comprises 419 residues: uncharacterized protein (419 aa).

A run of 11 helical transmembrane segments spans residues 1–21, 24–44, 66–86, 101–121, 174–194, 216–236, 242–262, 280–300, 311–331, 349–369, and 396–416; these read MTTV…FLIL, VSPA…GGAD, ILAA…NSIT, ALAL…VAVI, SVMM…YFLA, NLPS…LLAL, IKVD…FCMG, PVAI…NSGL, SGLP…LATA, LELG…ATVF, and IPYE…IFGV.

It belongs to the CitM (TC 2.A.11) transporter family.

It localises to the cell membrane. This is an uncharacterized protein from Haemophilus influenzae (strain ATCC 51907 / DSM 11121 / KW20 / Rd).